A 201-amino-acid chain; its full sequence is Dephospho-CoA kinase (201 aa).

The region spanning 3 to 201 (WIGLTGGIAC…KWLEELKNQN (199 aa)) is the DPCK domain. 11–16 (ACGKST) lines the ATP pocket.

It belongs to the CoaE family.

The protein localises to the cytoplasm. The catalysed reaction is 3'-dephospho-CoA + ATP = ADP + CoA + H(+). Its pathway is cofactor biosynthesis; coenzyme A biosynthesis; CoA from (R)-pantothenate: step 5/5. Catalyzes the phosphorylation of the 3'-hydroxyl group of dephosphocoenzyme A to form coenzyme A. This Bdellovibrio bacteriovorus (strain ATCC 15356 / DSM 50701 / NCIMB 9529 / HD100) protein is Dephospho-CoA kinase.